The primary structure comprises 487 residues: Serine/threonine-protein kinase 4 (487 aa).

Met-1 carries the post-translational modification N-acetylmethionine. At Thr-3 the chain carries Phosphothreonine. One can recognise a Protein kinase domain in the interval 30-281 (FDVLEKLGEG…ATQLLQHPFV (252 aa)). ATP-binding positions include 36–44 (LGEGSYGSV) and Lys-59. The active-site Proton acceptor is the Asp-149. Thr-183 bears the Phosphothreonine; by autocatalysis mark. A phosphoserine mark is found at Ser-265 and Ser-320. A coiled-coil region spans residues 289 to 327 (ILRDLINEAMDVKLKRQEAQQREVDQEEEENSEEDELDS). The tract at residues 305 to 332 (QEAQQREVDQEEEENSEEDELDSGTMVR) is disordered. The segment covering 313–326 (DQEEEENSEEDELD) has biased composition (acidic residues). Phosphothreonine is present on residues Thr-340 and Thr-367. Position 387 is a phosphothreonine; by PKB/AKT1 (Thr-387). Phosphoserine is present on residues Ser-410 and Ser-414. The residue at position 433 (Tyr-433) is a Phosphotyrosine. The SARAH domain maps to 433–480 (YEFLKSWTVEDLQKRLLALDPMMEQEIEEIRQKYQSKRQPILDAIEAK).

It belongs to the protein kinase superfamily. STE Ser/Thr protein kinase family. STE20 subfamily. In terms of assembly, homodimer; mediated via the coiled-coil region. Interacts with NORE1, which inhibits autoactivation. Interacts with and stabilizes SAV1. Interacts with RASSF1. Interacts with FOXO3. Interacts with RASSF2 (via SARAH domain). Interacts with AR, PKB/AKT1, TNNI3 and SIRT1. Interacts with DLG5 (via PDZ domain 3). Interacts with MARK3 and SCRIB in the presence of DLG5. Mg(2+) is required as a cofactor. In terms of processing, autophosphorylated on serine and threonine residues. Phosphorylation at Thr-387 by PKB/AKT1, leads to inhibition of its: kinase activity, nuclear translocation and autophosphorylation at Thr-183. It also diminishes its cleavage by caspases and its ability to phosphorylate FOXO3. Post-translationally, proteolytically cleaved by caspase-3 during apoptosis at Asp-326 and Asp-349 resulting in a 37 kDa or a 39 kDa subunit respectively. The 39 kDa subunit is further cleaved into the 37 kDa form. Proteolytic cleavage results in kinase activation and nuclear translocation of the truncated form (MST1/N). It is less likely that cleavage at Asp-349 is a prerequisite for activation as this site is not conserved in the murine ortholog.

It localises to the cytoplasm. Its subcellular location is the nucleus. The enzyme catalyses L-seryl-[protein] + ATP = O-phospho-L-seryl-[protein] + ADP + H(+). The catalysed reaction is L-threonyl-[protein] + ATP = O-phospho-L-threonyl-[protein] + ADP + H(+). Inhibited by the C-terminal non-catalytic region. Activated by caspase-cleavage. Full activation also requires homodimerization and autophosphorylation of Thr-183. Activated by RASSF1 which acts by preventing its dephosphorylation. Stress-activated, pro-apoptotic kinase which, following caspase-cleavage, enters the nucleus and induces chromatin condensation followed by internucleosomal DNA fragmentation. Key component of the Hippo signaling pathway which plays a pivotal role in organ size control and tumor suppression by restricting proliferation and promoting apoptosis. The core of this pathway is composed of a kinase cascade wherein STK3/MST2 and STK4/MST1, in complex with its regulatory protein SAV1, phosphorylates and activates LATS1/2 in complex with its regulatory protein MOB1, which in turn phosphorylates and inactivates YAP1 oncoprotein and WWTR1/TAZ. Phosphorylation of YAP1 by LATS2 inhibits its translocation into the nucleus to regulate cellular genes important for cell proliferation, cell death, and cell migration. STK3/MST2 and STK4/MST1 are required to repress proliferation of mature hepatocytes, to prevent activation of facultative adult liver stem cells (oval cells), and to inhibit tumor formation. Phosphorylates 'Ser-14' of histone H2B (H2BS14ph) during apoptosis. Phosphorylates FOXO3 upon oxidative stress, which results in its nuclear translocation and cell death initiation. Phosphorylates MOBKL1A, MOBKL1B and RASSF2. Phosphorylates TNNI3 (cardiac Tn-I) and alters its binding affinity to TNNC1 (cardiac Tn-C) and TNNT2 (cardiac Tn-T). Phosphorylates FOXO1 on 'Ser-212' and regulates its activation and stimulates transcription of PMAIP1 in a FOXO1-dependent manner. Phosphorylates SIRT1 and inhibits SIRT1-mediated p53/TP53 deacetylation, thereby promoting p53/TP53 dependent transcription and apoptosis upon DNA damage. Acts as an inhibitor of PKB/AKT1. Phosphorylates AR on 'Ser-650' and suppresses its activity by intersecting with PKB/AKT1 signaling and antagonizing formation of AR-chromatin complexes. This is Serine/threonine-protein kinase 4 (STK4) from Bos taurus (Bovine).